The following is a 77-amino-acid chain: MKMNITKSYVILFLVVVMTNSLSNSEVLVAPVIETAQNDVCFVPCTSRYGHYECAFDCMHKRYKDGGCVHGRCCCKT.

Positions 1–25 are cleaved as a signal peptide; sequence MKMNITKSYVILFLVVVMTNSLSNS. Disulfide bonds link cysteine 41/cysteine 75, cysteine 45/cysteine 68, cysteine 54/cysteine 73, and cysteine 58/cysteine 74.

This sequence belongs to the DEFL family.

It localises to the secreted. The protein is Putative defensin-like protein 60 of Arabidopsis thaliana (Mouse-ear cress).